The following is a 336-amino-acid chain: MIATQRPFPIPSPVPLAPSSTVLPTTVPENAPEHCPGVESSQAGKADACEGCPNQSVCAEGPKGPDPDLPLIRERMSSVRRKILVLSGKGGVGKSTFTAGLSWALAADEECQAGIMDIDICGPSIPLLMGLESSTIHTSASGWSPAYALDNLAVMSIGFLLPSSSDAVIWRGPKKNGLIKQFLKDVEWGDLDYMVVDTPPGTSDEHLSIVQYLKEAGIDGAVLVTTPQEVALQDVRKEIDFCKKVGIPILGLVENMSGFVCPNCKNESQIFAPTTGGAEAMGKELGIELLGKVPLDPRIGMTCDQGMSFLDEYPESPATMAYLDIVQRIREILDDE.

Residues 1 to 20 (MIATQRPFPIPSPVPLAPSS) are disordered. Residues cysteine 35, cysteine 49, cysteine 52, and cysteine 58 each coordinate [4Fe-4S] cluster. 88-95 (GKGGVGKS) lines the ATP pocket. [4Fe-4S] cluster contacts are provided by cysteine 261 and cysteine 264.

The protein belongs to the Mrp/NBP35 ATP-binding proteins family. NUBP1/NBP35 subfamily. As to quaternary structure, heterotetramer of 2 NBP35 and 2 CFD1 chains. The cofactor is [4Fe-4S] cluster.

It is found in the cytoplasm. Its function is as follows. Component of the cytosolic iron-sulfur (Fe/S) protein assembly (CIA) machinery. Required for maturation of extramitochondrial Fe-S proteins. The NBP35-CFD1 heterotetramer forms a Fe-S scaffold complex, mediating the de novo assembly of an Fe-S cluster and its transfer to target apoproteins. This Cryptococcus neoformans var. neoformans serotype D (strain B-3501A) (Filobasidiella neoformans) protein is Cytosolic Fe-S cluster assembly factor NBP35.